We begin with the raw amino-acid sequence, 554 residues long: Hedycaryol synthase (554 aa).

The (2E,6E)-farnesyl diphosphate site is built by arginine 270, aspartate 307, aspartate 311, arginine 449, and aspartate 452. Mg(2+)-binding residues include aspartate 307 and aspartate 311. A DDXXD motif motif is present at residues 307–311 (DDTYD). The Mg(2+) site is built by aspartate 452, serine 456, and glutamate 460.

The protein belongs to the terpene synthase family. The cofactor is Mg(2+). As to expression, specifically expressed in flowers.

It catalyses the reaction (2E,6E)-farnesyl diphosphate + H2O = (2E,6E)-hedycaryol + diphosphate. It functions in the pathway secondary metabolite biosynthesis; terpenoid biosynthesis. In terms of biological role, sesquiterpene synthase that catalyzes the formation of sesquiterpenes and sesquiterpenoid alcohols. Converts farnesyl diphosphate (FPP) to hedycaryol. Hedycaryol is likely to be one of the terpenes that attract insects for pollination of Camellia brevistyla. This is Hedycaryol synthase from Camellia brevistyla.